A 445-amino-acid polypeptide reads, in one-letter code: Ribosomal protein uS12 methylthiotransferase RimO (445 aa).

One can recognise an MTTase N-terminal domain in the interval 4–119 (LKFGLVSLGC…LDDAIEDFFN (116 aa)). Residues cysteine 13, cysteine 48, cysteine 82, cysteine 156, cysteine 160, and cysteine 163 each coordinate [4Fe-4S] cluster. A Radical SAM core domain is found at 142–372 (TTGEYSSYVR…MLIQQQVSKN (231 aa)). Residues 375–441 (AKKIGKVYKV…EYDLIGVVYN (67 aa)) enclose the TRAM domain.

This sequence belongs to the methylthiotransferase family. RimO subfamily. Requires [4Fe-4S] cluster as cofactor.

It localises to the cytoplasm. It carries out the reaction L-aspartate(89)-[ribosomal protein uS12]-hydrogen + (sulfur carrier)-SH + AH2 + 2 S-adenosyl-L-methionine = 3-methylsulfanyl-L-aspartate(89)-[ribosomal protein uS12]-hydrogen + (sulfur carrier)-H + 5'-deoxyadenosine + L-methionine + A + S-adenosyl-L-homocysteine + 2 H(+). Functionally, catalyzes the methylthiolation of an aspartic acid residue of ribosomal protein uS12. The protein is Ribosomal protein uS12 methylthiotransferase RimO of Clostridium acetobutylicum (strain ATCC 824 / DSM 792 / JCM 1419 / IAM 19013 / LMG 5710 / NBRC 13948 / NRRL B-527 / VKM B-1787 / 2291 / W).